The chain runs to 559 residues: uncharacterized protein (559 aa).

Disordered stretches follow at residues 315–360 (TDDA…ERDI) and 454–559 (DKID…STEN). Residues 320–329 (NENSDNSMNT) are compositionally biased toward polar residues. Over residues 348–357 (DNNDDSDDSE) the composition is skewed to acidic residues. Residues 433 to 495 (ELKIQEMEKI…KRRQKRSQRS (63 aa)) are a coiled coil. Residues 454–501 (DKIDMDQIKSEMSRRRDESNKRRDEKRKDREEKRRQKRSQRSDTRKQG) show a composition bias toward basic and acidic residues. The span at 507-527 (SDEATSDQTQSTDSNNTTQTA) shows a compositional bias: low complexity.

It is found in the virion. This is an uncharacterized protein from Acanthamoeba polyphaga mimivirus (APMV).